Consider the following 254-residue polypeptide: Bacteriorhodopsin-I (254 aa).

A propeptide spanning residues 1–6 (MSQLAL) is cleaved from the precursor. At Q7 the chain carries Pyrrolidone carboxylic acid. The next 7 helical transmembrane spans lie at 16 to 36 (EGIW…YFIA), 51 to 71 (VITI…FFGF), 91 to 111 (YADW…LAGA), 116 to 136 (IGAL…ATLT), 144 to 164 (AFWT…VAVF), 185 to 205 (IILV…EGLA), and 212 to 232 (ETLL…FILL). Residue K224 is modified to N6-(retinylidene)lysine.

Belongs to the archaeal/bacterial/fungal opsin family. The covalent binding of retinal to the apoprotein, bacterioopsin, generates bacteriorhodopsin.

The protein resides in the cell membrane. Functionally, light-driven proton pump. This is Bacteriorhodopsin-I (bop1) from Haloquadratum walsbyi (strain DSM 16854 / JCM 12705 / C23).